A 294-amino-acid chain; its full sequence is Acetylglutamate kinase (294 aa).

Residues 47–48, R69, and N168 contribute to the substrate site; that span reads GG.

The protein belongs to the acetylglutamate kinase family. ArgB subfamily.

The protein localises to the cytoplasm. The enzyme catalyses N-acetyl-L-glutamate + ATP = N-acetyl-L-glutamyl 5-phosphate + ADP. It functions in the pathway amino-acid biosynthesis; L-arginine biosynthesis; N(2)-acetyl-L-ornithine from L-glutamate: step 2/4. In terms of biological role, catalyzes the ATP-dependent phosphorylation of N-acetyl-L-glutamate. This Corynebacterium glutamicum (strain ATCC 13032 / DSM 20300 / JCM 1318 / BCRC 11384 / CCUG 27702 / LMG 3730 / NBRC 12168 / NCIMB 10025 / NRRL B-2784 / 534) protein is Acetylglutamate kinase.